A 358-amino-acid polypeptide reads, in one-letter code: UDP-N-acetylglucosamine--N-acetylmuramyl-(pentapeptide) pyrophosphoryl-undecaprenol N-acetylglucosamine transferase (358 aa).

UDP-N-acetyl-alpha-D-glucosamine-binding positions include 10–12 (TGG), N124, S196, and Q293.

This sequence belongs to the glycosyltransferase 28 family. MurG subfamily.

It localises to the cell membrane. The enzyme catalyses di-trans,octa-cis-undecaprenyl diphospho-N-acetyl-alpha-D-muramoyl-L-alanyl-D-glutamyl-meso-2,6-diaminopimeloyl-D-alanyl-D-alanine + UDP-N-acetyl-alpha-D-glucosamine = di-trans,octa-cis-undecaprenyl diphospho-[N-acetyl-alpha-D-glucosaminyl-(1-&gt;4)]-N-acetyl-alpha-D-muramoyl-L-alanyl-D-glutamyl-meso-2,6-diaminopimeloyl-D-alanyl-D-alanine + UDP + H(+). Its pathway is cell wall biogenesis; peptidoglycan biosynthesis. In terms of biological role, cell wall formation. Catalyzes the transfer of a GlcNAc subunit on undecaprenyl-pyrophosphoryl-MurNAc-pentapeptide (lipid intermediate I) to form undecaprenyl-pyrophosphoryl-MurNAc-(pentapeptide)GlcNAc (lipid intermediate II). The chain is UDP-N-acetylglucosamine--N-acetylmuramyl-(pentapeptide) pyrophosphoryl-undecaprenol N-acetylglucosamine transferase from Exiguobacterium sp. (strain ATCC BAA-1283 / AT1b).